A 167-amino-acid polypeptide reads, in one-letter code: uncharacterized protein (167 aa).

Positions 1-23 (MKRLHKRFLLATFCALFTATLQA) are cleaved as a signal peptide. A disulfide bond links cysteine 39 and cysteine 77.

The protein belongs to the fimbrial protein family.

It is found in the fimbrium. This is an uncharacterized protein from Escherichia coli (strain K12).